The sequence spans 1166 residues: DEAD-box ATP-dependent RNA helicase 42 (1166 aa).

2 stretches are compositionally biased toward basic and acidic residues: residues 1–12 (MEVEKSKYRSED) and 21–45 (DLKK…EKRR). The segment at 1 to 460 (MEVEKSKYRS…NDDDPSLDED (460 aa)) is disordered. Residues 14–95 (DVVEEEADLK…KDRVKRRSER (82 aa)) are a coiled coil. Acidic residues predominate over residues 59-70 (SEDDYDRDDDEE). The span at 80 to 95 (ERRRRDKDRVKRRSER) shows a compositional bias: basic residues. Acidic residues predominate over residues 101–110 (SEDDVEEEDE). Residues 111–206 (RDKRRVNEKE…RERERSREVG (96 aa)) show a composition bias toward basic and acidic residues. Residues 130–302 (RGKDRKRDRE…KRKKEEAESE (173 aa)) adopt a coiled-coil conformation. Phosphoserine is present on Ser210. The span at 224–314 (EGGERKEKER…GDADGNEPKA (91 aa)) shows a compositional bias: basic and acidic residues. Ser324 is modified (phosphoserine). Basic and acidic residues-rich tracts occupy residues 344 to 357 (ETKP…KMVD) and 416 to 426 (MNGKESGDRPK). Positions 529–557 (KFWHQTGLTSKILDTMKKLNYEKPMPIQT) match the Q motif motif. In terms of domain architecture, Helicase ATP-binding spans 560-738 (LPIIMSGRDC…RKVLNKPVEI (179 aa)). 573-580 (AKTGSGKT) contributes to the ATP binding site. A DEAD box motif is present at residues 686 to 689 (DEAD). A Helicase C-terminal domain is found at 749–910 (DITQLVEVRP…PVPDDLKALA (162 aa)).

This sequence belongs to the DEAD box helicase family. DDX46/PRP5 subfamily.

It localises to the nucleus. It carries out the reaction ATP + H2O = ADP + phosphate + H(+). Its function is as follows. Helicase required for pre-mRNA splicing, cold-responsive gene regulation and cold tolerance. This is DEAD-box ATP-dependent RNA helicase 42 (RH42) from Arabidopsis thaliana (Mouse-ear cress).